Consider the following 165-residue polypeptide: REP-associated tyrosine transposase (165 aa).

Belongs to the transposase 17 family. RAYT subfamily. As to quaternary structure, monomer.

Cleavage occurs in the presence of magnesium, but is much more pronounced with manganese. Its function is as follows. Transposase that is always flanked by repeated extragenic palindrome (REP) sequences, which are clustered in structures called bacterial interspersed mosaic elements (BIMEs). RayT catalyzes cleavage and recombination of BIMEs. Binds REP sequences and cleaves BIMEs both upstream and downstream of the REP sequence. Could be important in the creation of BIME variability and amplification. This is REP-associated tyrosine transposase from Escherichia coli (strain K12).